Here is a 126-residue protein sequence, read N- to C-terminus: Aspartate 1-decarboxylase (126 aa).

The Schiff-base intermediate with substrate; via pyruvic acid role is filled by Ser-25. Residue Ser-25 is modified to Pyruvic acid (Ser). Residue Thr-57 participates in substrate binding. The active-site Proton donor is Tyr-58. 73–75 (GAA) serves as a coordination point for substrate.

The protein belongs to the PanD family. As to quaternary structure, heterooctamer of four alpha and four beta subunits. Pyruvate is required as a cofactor. Post-translationally, is synthesized initially as an inactive proenzyme, which is activated by self-cleavage at a specific serine bond to produce a beta-subunit with a hydroxyl group at its C-terminus and an alpha-subunit with a pyruvoyl group at its N-terminus.

Its subcellular location is the cytoplasm. The catalysed reaction is L-aspartate + H(+) = beta-alanine + CO2. Its pathway is cofactor biosynthesis; (R)-pantothenate biosynthesis; beta-alanine from L-aspartate: step 1/1. Its function is as follows. Catalyzes the pyruvoyl-dependent decarboxylation of aspartate to produce beta-alanine. The polypeptide is Aspartate 1-decarboxylase (Saccharophagus degradans (strain 2-40 / ATCC 43961 / DSM 17024)).